We begin with the raw amino-acid sequence, 345 residues long: 4-hydroxy-2-oxovalerate aldolase 1 (345 aa).

Residues 9-261 enclose the Pyruvate carboxyltransferase domain; the sequence is IRVTDTSLRD…RTGIDFFAIA (253 aa). A substrate-binding site is contributed by 17 to 18; that stretch reads RD. D18 contacts Mn(2+). The active-site Proton acceptor is H21. Substrate is bound by residues S171 and H200. Residues H200 and H202 each contribute to the Mn(2+) site. Y291 contacts substrate.

This sequence belongs to the 4-hydroxy-2-oxovalerate aldolase family.

It catalyses the reaction (S)-4-hydroxy-2-oxopentanoate = acetaldehyde + pyruvate. This chain is 4-hydroxy-2-oxovalerate aldolase 1, found in Nocardia farcinica (strain IFM 10152).